We begin with the raw amino-acid sequence, 540 residues long: MRVNNGLTPQELEAYGISDVHDIVYNPSYDLLYQEELDPSLTGYERGVLTNLGAVAVDTGIFTGRSPKDKYIVRDDTTRDTFWWADKGKGKNDNKPLSPETWQHLKGLVTRQLSGKRLFVVDAFCGANPDTRLSVRFITEVAWQAHFVKNMFIRPSDEELAGFKPDFIVMNGAKCTNPQWKEQGLNSENFVAFNLTERMQLIGGTWYGGEMKKGMFSMMNYLLPLKGIASMHCSANVGEKGDVAVFFGLSGTGKTTLSTDPKRRLIGDDEHGWDDDGVFNFEGGCYAKTIKLSKEAEPEIYNAIRRDALLENVTVREDGTIDFDDGSKTENTRVSYPIYHIDNIVKPVSKAGHATKVIFLTADAFGVLPPVSRLTADQTQYHFLSGFTAKLAGTERGITEPTPTFSACFGAAFLSLHPTQYAEVLVKRMQAAGAQAYLVNTGWNGTGKRISIKDTRAIIDAILNGSLDNAETFTLPMFNLAIPTELPGVDTKILDPRNTYASPEQWQEKAETLAKLFIDNFDKYTDTPAGAALVAAGPKL.

Arg-65 serves as a coordination point for substrate. An N6-acetyllysine modification is found at Lys-87. Substrate-binding residues include Tyr-207 and Lys-213. ATP is bound by residues Lys-213, His-232, and 248–256 (GLSGTGKTT). Residues Lys-213 and His-232 each coordinate Mn(2+). Asp-269 provides a ligand contact to Mn(2+). ATP-binding positions include Glu-297, Arg-333, 449–450 (RI), and Thr-455. Arg-333 provides a ligand contact to substrate. An N6-acetyllysine modification is found at Lys-523.

The protein belongs to the phosphoenolpyruvate carboxykinase (ATP) family. In terms of assembly, monomer. It depends on Mn(2+) as a cofactor.

The protein resides in the cytoplasm. The catalysed reaction is oxaloacetate + ATP = phosphoenolpyruvate + ADP + CO2. It functions in the pathway carbohydrate biosynthesis; gluconeogenesis. Functionally, involved in the gluconeogenesis. Catalyzes the conversion of oxaloacetate (OAA) to phosphoenolpyruvate (PEP) through direct phosphoryl transfer between the nucleoside triphosphate and OAA. This chain is Phosphoenolpyruvate carboxykinase (ATP), found in Escherichia coli O127:H6 (strain E2348/69 / EPEC).